The sequence spans 764 residues: Transient receptor potential cation channel subfamily V member 2 (764 aa).

Positions methionine 1 to glutamate 46 are disordered. The tract at residues methionine 1–isoleucine 388 is required for interaction with SLC50A1. The Cytoplasmic segment spans residues methionine 1–lysine 390. Serine 6 bears the Phosphoserine mark. ANK repeat units follow at residues asparagine 72–serine 114, threonine 115–tyrosine 161, arginine 162–tyrosine 207, phenylalanine 208–serine 243, glutamine 244–leucine 292, and glutamine 293–serine 319. A helical membrane pass occupies residues phenylalanine 391–histidine 411. Over glutamine 412–threonine 434 the chain is Extracellular. A helical transmembrane segment spans residues glycine 435–tryptophan 455. Topologically, residues arginine 456–glutamate 471 are cytoplasmic. Residues isoleucine 472–isoleucine 492 traverse the membrane as a helical segment. Glutamate 493 is a topological domain (extracellular). Residues tryptophan 494–threonine 514 form a helical membrane-spanning segment. The Cytoplasmic segment spans residues arginine 515–arginine 537. The helical transmembrane segment at phenylalanine 538–glutamine 558 threads the bilayer. The disordered stretch occupies residues arginine 562–glycine 585. Asparagine 570 carries an N-linked (GlcNAc...) asparagine glycan. Residues threonine 572–glutamate 609 constitute an intramembrane region (pore-forming). Residues valine 622–isoleucine 642 form a helical membrane-spanning segment. The Cytoplasmic portion of the chain corresponds to alanine 643–asparagine 764. Residues proline 725 to valine 756 are disordered. 2 positions are modified to phosphoserine: serine 751 and serine 763.

This sequence belongs to the transient receptor (TC 1.A.4) family. TrpV subfamily. TRPV2 sub-subfamily. Homotetramer. Interacts with a cAMP-dependent protein kinase type II regulatory subunit (PRKAR2A or PRKAR2B) and ACBD3. Interacts with SLC50A1; the interaction probably occurs intracellularly and depends on TRPV2 N-glycosylation. Post-translationally, N-glycosylated. Phosphorylated by PKA.

The protein resides in the cell membrane. It is found in the cytoplasm. Its subcellular location is the melanosome. It carries out the reaction Ca(2+)(in) = Ca(2+)(out). The catalysed reaction is Mg(2+)(in) = Mg(2+)(out). The enzyme catalyses Na(+)(in) = Na(+)(out). It catalyses the reaction K(+)(in) = K(+)(out). In terms of biological role, calcium-permeable, non-selective cation channel with an outward rectification. Seems to be regulated, at least in part, by IGF1, PDGF and neuropeptide head activator. May transduce physical stimuli in mast cells. Activated by temperatures higher than 52 degrees Celsius; is not activated by vanilloids and acidic pH. This Homo sapiens (Human) protein is Transient receptor potential cation channel subfamily V member 2 (TRPV2).